Consider the following 186-residue polypeptide: Photosystem I assembly protein Ycf4 (186 aa).

A run of 2 helical transmembrane segments spans residues 22 to 42 (FCWA…GTSS) and 57 to 77 (IIFF…LFIS).

Belongs to the Ycf4 family.

The protein resides in the plastid. It is found in the chloroplast thylakoid membrane. In terms of biological role, seems to be required for the assembly of the photosystem I complex. This is Photosystem I assembly protein Ycf4 from Dioscorea elephantipes (Elephant's foot yam).